A 962-amino-acid chain; its full sequence is MPRSTWFKALLLLVALWGPAVQADIGWQPLQETIRKSDKDTRQYQAIRLDNDMVVLLVSDPQAVKSLSALVVPVVSLEDPEAHQGLAHYLEHMCLMGSKKYPQADSLAEYLKRHGGSHNASTAPYRTAFYLEVENDALPGAVDRLADAIAAPLLNKKYAERERNAVNAELTMARTRDGMRMAQVSAETINPAHPGSHFSGGNLETLSDKPGNPVQQALIAFHEKYYSSNLMKAVIYSNKPLPELASIAAATYGRVPNKQIKKPEITVPVITEAQKGIIIHYVPALPRKVLRVEFRIDNNSAQFRSKTDELVSYLIGNRSPGTLSDWLQKQGLVEGISADSDPIVNGNSGVFAISATLTDKGLANRDEVVAAIFSYLNTLREKGIDKRYFDELAHVLDLDFRYPSITRDMDYVEWLADTMIRVPVAHTLDAANIADRYDPAAIKNRLAMMTPQNARIWYISPQEPHNKIAYFVDAPYQVDKISEQTFKNWQQKAQGIALSLPELNPYIPDDFTLIKNDKNYVRPELIVDKADLRVVYAPSRYFASEPKADVSVVLRNPQAMDSARNQVLFALNDYLAGMALDQLSNQAAVGGISFSTNANNGLMVTANGYTQRLPQLFLALLEGYFSYDATEEQLAQAKSWYTQMMDSAEKGKAYEQAIMPVQMISQVPYFSRDERRALLPSITLKEVMAYRNALKTGARPEFLVIGNMSEAQATSLAQDVQKQLAANGSAWCRNKDVVVEKKQSVIFEKAGSSTDSALAAVFVPVGYDEYVSAAYSAMLGQIVQPWFYNQLRTEEQLGYAVFAFPMSVGRQWGMGFLLQSNDKQPSYLWQRYQAFFPDAEAKLRAMKPEEFAQIQQAIITQMRQAPQTLGEEASRLSKDFDRGNMRFDSRDKIIAQIKLLTPQKLADFFHQAVVEPQGMAILSQIAGSQNGKAEYVHPTGWKVWDNVSALQQTLPLMSEKNE.

Positions 1–23 (MPRSTWFKALLLLVALWGPAVQA) are cleaved as a signal peptide. A Zn(2+)-binding site is contributed by His88. Glu91 acts as the Proton acceptor in catalysis. Zn(2+) is bound by residues His92 and Glu169.

The protein belongs to the peptidase M16 family. As to quaternary structure, monomer. Requires Zn(2+) as cofactor.

The protein localises to the periplasm. It carries out the reaction Preferential cleavage of 16-Tyr-|-Leu-17 and 25-Phe-|-Tyr-26 bonds of oxidized insulin B chain. Also acts on other substrates of Mw less than 7 kDa such as insulin and glucagon.. In terms of biological role, endopeptidase that degrades small peptides of less than 7 kDa, such as glucagon and insulin. The sequence is that of Protease 3 (ptrA) from Salmonella typhi.